The following is a 277-amino-acid chain: Large ribosomal subunit protein uL2 (277 aa).

Disordered regions lie at residues 28–55 and 207–277; these read EPEK…RHRG and KAGR…RTQG. 3 stretches are compositionally biased toward basic residues: residues 34–43, 209–220, and 255–265; these read THHKHSKQGR, GRTRHRGQRPHV, and LGRKTRNKKKR.

It belongs to the universal ribosomal protein uL2 family. As to quaternary structure, part of the 50S ribosomal subunit. Forms a bridge to the 30S subunit in the 70S ribosome.

One of the primary rRNA binding proteins. Required for association of the 30S and 50S subunits to form the 70S ribosome, for tRNA binding and peptide bond formation. It has been suggested to have peptidyltransferase activity; this is somewhat controversial. Makes several contacts with the 16S rRNA in the 70S ribosome. This chain is Large ribosomal subunit protein uL2, found in Microcystis aeruginosa (strain NIES-843 / IAM M-2473).